The primary structure comprises 556 residues: tRNA (guanine(37)-N(1))-methyltransferase (556 aa).

The N-terminal 30 residues, Met-1–Tyr-30, are a transit peptide targeting the mitochondrion. S-adenosyl-L-methionine is bound by residues His-249, Asp-287–Leu-288, Asp-315–Ala-316, and Asn-346. Disordered stretches follow at residues Gln-444–Asp-465 and Lys-524–Met-556. Basic and acidic residues-rich tracts occupy residues Glu-454–Asp-465 and Ser-540–Ala-549.

The protein belongs to the class I-like SAM-binding methyltransferase superfamily. TRM5/TYW2 family. In terms of assembly, monomer.

The protein localises to the mitochondrion matrix. The protein resides in the nucleus. It is found in the cytoplasm. The enzyme catalyses guanosine(37) in tRNA + S-adenosyl-L-methionine = N(1)-methylguanosine(37) in tRNA + S-adenosyl-L-homocysteine + H(+). In terms of biological role, specifically methylates the N1 position of guanosine-37 in various cytoplasmic and mitochondrial tRNAs. Methylation is not dependent on the nature of the nucleoside 5' of the target nucleoside. This is the first step in the biosynthesis of wybutosine (yW), a modified base adjacent to the anticodon of tRNAs and required for accurate decoding. The sequence is that of tRNA (guanine(37)-N(1))-methyltransferase from Anopheles gambiae (African malaria mosquito).